Reading from the N-terminus, the 495-residue chain is DNA double-strand break repair helicase HerA (495 aa).

Residues Arg-141, 150 to 155, and 458 to 459 each bind ATP; these read GSGKSN and KI.

This sequence belongs to the HerA family. As to quaternary structure, forms a hexamer or a heptamer. Interacts with Mre11.

It catalyses the reaction Couples ATP hydrolysis with the unwinding of duplex DNA at the replication fork by translocating in the 5'-3' direction. This creates two antiparallel DNA single strands (ssDNA). The leading ssDNA polymer is the template for DNA polymerase III holoenzyme which synthesizes a continuous strand.. The enzyme catalyses ATP + H2O = ADP + phosphate + H(+). The catalysed reaction is Couples ATP hydrolysis with the unwinding of duplex DNA by translocating in the 3'-5' direction.. With respect to regulation, ATPase activity is slightly stimulated by either circular single- or double-stranded (ds)DNA with a weak preference for dsDNA. Helicase activity is stimulated by Mre11. In terms of biological role, involved in DNA double-strand break (DSB) repair. Probably acts with NurA to stimulate resection of the 5' strand and produce the long 3' single-strand that is required for RadA loading. Has DNA-dependent ATPase activity and bidirectional DNA helicase activity. Loads on either a 3' or a 5' DNA tail for subsequent DNA unwinding. Can also unwind blunt-ended dsDNA, Holliday junction and splayed-arm DNA. This chain is DNA double-strand break repair helicase HerA, found in Sulfurisphaera tokodaii (strain DSM 16993 / JCM 10545 / NBRC 100140 / 7) (Sulfolobus tokodaii).